The primary structure comprises 71 residues: cAMP-dependent protein kinase inhibitor beta (71 aa).

The interval 1–21 (MTDVESVISSFASSARAGRRN) is disordered. Position 2 is a blocked amino end (Thr) (Thr-2). Ser-35 is subject to Phosphoserine. Residues 51 to 71 (AKMKNEEKDQGQPKKPLDEDK) are disordered.

This sequence belongs to the PKI family. In terms of tissue distribution, testis.

Functionally, extremely potent competitive inhibitor of cAMP-dependent protein kinase activity, this protein interacts with the catalytic subunit of the enzyme after the cAMP-induced dissociation of its regulatory chains. The protein is cAMP-dependent protein kinase inhibitor beta (Pkib) of Rattus norvegicus (Rat).